Consider the following 73-residue polypeptide: Translation initiation factor IF-1 (73 aa).

The S1-like domain occupies 1–73 (MAKKDGVIEI…TRGRIVYRYK (73 aa)).

It belongs to the IF-1 family. Component of the 30S ribosomal translation pre-initiation complex which assembles on the 30S ribosome in the order IF-2 and IF-3, IF-1 and N-formylmethionyl-tRNA(fMet); mRNA recruitment can occur at any time during PIC assembly.

The protein resides in the cytoplasm. One of the essential components for the initiation of protein synthesis. Stabilizes the binding of IF-2 and IF-3 on the 30S subunit to which N-formylmethionyl-tRNA(fMet) subsequently binds. Helps modulate mRNA selection, yielding the 30S pre-initiation complex (PIC). Upon addition of the 50S ribosomal subunit IF-1, IF-2 and IF-3 are released leaving the mature 70S translation initiation complex. In Leifsonia xyli subsp. xyli (strain CTCB07), this protein is Translation initiation factor IF-1.